The following is a 149-amino-acid chain: Transcriptional repressor NrdR (149 aa).

The segment at 3-34 is a zinc-finger region; it reads CPFCQSDDTKVLDTRLIDDGSQVRRRRECVSC. The 91-residue stretch at 49–139 folds into the ATP-cone domain; that stretch reads PHLIKSDDSR…VYRQFQDIEA (91 aa).

It belongs to the NrdR family. Zn(2+) serves as cofactor.

Negatively regulates transcription of bacterial ribonucleotide reductase nrd genes and operons by binding to NrdR-boxes. The sequence is that of Transcriptional repressor NrdR from Ruthia magnifica subsp. Calyptogena magnifica.